Reading from the N-terminus, the 121-residue chain is ATP synthase epsilon chain (121 aa).

The protein belongs to the ATPase epsilon chain family. F-type ATPases have 2 components, CF(1) - the catalytic core - and CF(0) - the membrane proton channel. CF(1) has five subunits: alpha(3), beta(3), gamma(1), delta(1), epsilon(1). CF(0) has three main subunits: a, b and c.

The protein resides in the cell membrane. Its function is as follows. Produces ATP from ADP in the presence of a proton gradient across the membrane. The sequence is that of ATP synthase epsilon chain from Mycobacterium leprae (strain Br4923).